A 137-amino-acid polypeptide reads, in one-letter code: MPLQIFNTTKRTIDETLLAEVIRLVIGEEGGAVGSIEAIYCGNKMIRRINRDFLGHDYVTDTITFGYNEGGEVDGEFYISLDVIESNARRFGVSFEDELLRVTIHSALHLMGYDDETSELRAAMSLREDHYLYRLRH.

Zn(2+)-binding residues include His-105, His-109, and Asp-115.

This sequence belongs to the endoribonuclease YbeY family. Zn(2+) is required as a cofactor.

The protein localises to the cytoplasm. Single strand-specific metallo-endoribonuclease involved in late-stage 70S ribosome quality control and in maturation of the 3' terminus of the 16S rRNA. The sequence is that of Endoribonuclease YbeY from Chlorobaculum tepidum (strain ATCC 49652 / DSM 12025 / NBRC 103806 / TLS) (Chlorobium tepidum).